The following is a 323-amino-acid chain: Peroxisomal and mitochondrial division factor 2 (323 aa).

Disordered regions lie at residues Met1–Ile55, Glu73–Glu92, and Thr120–Gly143. Residues Met1–Ser297 lie on the Cytoplasmic side of the membrane. A compositionally biased stretch (acidic residues) spans Gly13 to Gly26. The stretch at Asp28–Glu278 forms a coiled coil. Residues Gly298 to Tyr318 traverse the membrane as a helical segment. Over His319–Val323 the chain is Mitochondrial intermembrane.

Homodimer. Interacts with PMD1.

Its subcellular location is the mitochondrion outer membrane. Involved in morphogenesis and proliferation of mitochondria. Does not act redundantly with PMD1. Is not involved in peroxisomal proliferation. This Arabidopsis thaliana (Mouse-ear cress) protein is Peroxisomal and mitochondrial division factor 2.